A 262-amino-acid chain; its full sequence is Conserved oligomeric Golgi complex subunit 2 (262 aa).

Component of the conserved oligomeric Golgi (COG or Sec34/Sec35) complex which consists of eight different proteins COG1-COG8. The COG complex interacts with the Rab GTPase YPT1, the Glogi SNAREs GOS1, SEC22, SED5, VTI1 and YKT6 and the COPI coatomer subunit gamma SEC21.

It is found in the golgi apparatus membrane. Its function is as follows. Acts as a component of the peripheral membrane COG complex that is involved in intra-Golgi protein trafficking. COG is located at the cis-Golgi, and regulates tethering of retrograde intra-Golgi vesicles and possibly a number of other membrane trafficking events. COG2 is required for ER to Golgi vesicle docking. Not essential for viability. In Saccharomyces cerevisiae (strain ATCC 204508 / S288c) (Baker's yeast), this protein is Conserved oligomeric Golgi complex subunit 2 (COG2).